A 916-amino-acid chain; its full sequence is DNA ligase 1 (916 aa).

Residues 1 to 10 show a composition bias toward polar residues; the sequence is MQRSIMSFFQ. A disordered region spans residues 1–197; that stretch reads MQRSIMSFFQ…SPESVTLTKT (197 aa). The segment covering 13 to 43 has biased composition (basic and acidic residues); it reads KEGKAKKPEKETPSSIREKEPPPKVALKERN. 3 positions are modified to phosphoserine: Ser-49, Ser-51, and Ser-65. Phosphothreonine is present on Thr-77. Residues 99–111 show a composition bias toward polar residues; the sequence is PENSPVFNCSSPM. Basic residues predominate over residues 119-129; that stretch reads PKRRTARKQLP. Residue Lys-144 is modified to N6-acetyllysine. Residues 153–177 show a composition bias toward basic and acidic residues; that stretch reads KEEETPKESLAEAEDIKQKEEKEGD. Positions 185–197 are enriched in polar residues; sequence PTKSPESVTLTKT. Position 193 is a phosphothreonine (Thr-193). At Lys-225 the chain carries N6-acetyllysine. Phosphoserine is present on residues Ser-228 and Ser-229. Thr-232 carries the phosphothreonine modification. The interval 236 to 266 is disordered; sequence PAVKTEVKQEESGTLRKEETKGTLDPANYNP. Residues 238–257 show a composition bias toward basic and acidic residues; it reads VKTEVKQEESGTLRKEETKG. Positions 447–456 are interaction with target DNA; the sequence is RLRLGLAEQS. Glu-564 contacts ATP. The active-site N6-AMP-lysine intermediate is the Lys-566. ATP-binding residues include Arg-571 and Glu-619. Glu-619 lines the Mg(2+) pocket. The interval 640 to 642 is interaction with target DNA; it reads KRK. Position 718 (Glu-718) interacts with Mg(2+). 2 residues coordinate ATP: Lys-723 and Lys-742. Thr-796 carries the post-translational modification Phosphothreonine. Phosphoserine occurs at positions 799, 906, 907, and 911. The disordered stretch occupies residues 879 to 916; sequence DKQPEQATTSNQVASLYRKQSQIQNQQSSDLDSDVEDY. Polar residues predominate over residues 883–908; sequence EQATTSNQVASLYRKQSQIQNQQSSD.

This sequence belongs to the ATP-dependent DNA ligase family. Interacts with PCNA. Interacts with POLB. Requires Mg(2+) as cofactor.

It localises to the nucleus. The enzyme catalyses ATP + (deoxyribonucleotide)n-3'-hydroxyl + 5'-phospho-(deoxyribonucleotide)m = (deoxyribonucleotide)n+m + AMP + diphosphate.. DNA ligase that seals nicks in double-stranded during DNA repair. Also involved in DNA replication and DNA recombination. The protein is DNA ligase 1 (Lig1) of Mus musculus (Mouse).